A 272-amino-acid chain; its full sequence is Indole-3-glycerol phosphate synthase (272 aa).

This sequence belongs to the TrpC family.

The catalysed reaction is 1-(2-carboxyphenylamino)-1-deoxy-D-ribulose 5-phosphate + H(+) = (1S,2R)-1-C-(indol-3-yl)glycerol 3-phosphate + CO2 + H2O. It participates in amino-acid biosynthesis; L-tryptophan biosynthesis; L-tryptophan from chorismate: step 4/5. This chain is Indole-3-glycerol phosphate synthase, found in Mycobacterium leprae (strain Br4923).